The following is a 92-amino-acid chain: Endoribonuclease VapD homolog (92 aa).

The protein belongs to the VapD ribonuclease family. As to quaternary structure, homodimer.

Functionally, cleaves ssRNA, mostly between U:A. The polypeptide is Endoribonuclease VapD homolog (Neisseria gonorrhoeae).